The chain runs to 312 residues: tRNA dimethylallyltransferase (312 aa).

Residue 11-18 (GATATGKT) coordinates ATP. 13–18 (TATGKT) lines the substrate pocket. Residues 36–39 (DSRQ) are interaction with substrate tRNA.

Belongs to the IPP transferase family. As to quaternary structure, monomer. It depends on Mg(2+) as a cofactor.

It carries out the reaction adenosine(37) in tRNA + dimethylallyl diphosphate = N(6)-dimethylallyladenosine(37) in tRNA + diphosphate. In terms of biological role, catalyzes the transfer of a dimethylallyl group onto the adenine at position 37 in tRNAs that read codons beginning with uridine, leading to the formation of N6-(dimethylallyl)adenosine (i(6)A). The protein is tRNA dimethylallyltransferase of Thermosynechococcus vestitus (strain NIES-2133 / IAM M-273 / BP-1).